The following is a 238-amino-acid chain: 2,3,4,5-tetrahydropyridine-2,6-dicarboxylate N-acetyltransferase (238 aa).

It belongs to the transferase hexapeptide repeat family. DapH subfamily.

It catalyses the reaction (S)-2,3,4,5-tetrahydrodipicolinate + acetyl-CoA + H2O = L-2-acetamido-6-oxoheptanedioate + CoA. The protein operates within amino-acid biosynthesis; L-lysine biosynthesis via DAP pathway; LL-2,6-diaminopimelate from (S)-tetrahydrodipicolinate (acetylase route): step 1/3. Its function is as follows. Catalyzes the transfer of an acetyl group from acetyl-CoA to tetrahydrodipicolinate. The protein is 2,3,4,5-tetrahydropyridine-2,6-dicarboxylate N-acetyltransferase of Clostridioides difficile (strain 630) (Peptoclostridium difficile).